The sequence spans 359 residues: Hyaluronan and proteoglycan link protein 3 (359 aa).

A signal peptide spans 1-17; the sequence is MSLLFLVLLSPFPCVLG. Residues 48-164 form the Ig-like V-type domain; the sequence is KLVVETTEES…ESGLVELELR (117 aa). Cystine bridges form between Cys-70–Cys-146, Cys-188–Cys-259, Cys-212–Cys-233, Cys-286–Cys-355, and Cys-311–Cys-332. Link domains follow at residues 166–261 and 266–357; these read VVFP…FCFA and GRVY…YCYV.

Belongs to the HAPLN family.

The protein localises to the secreted. The protein resides in the extracellular space. It is found in the extracellular matrix. May function in hyaluronic acid binding. The chain is Hyaluronan and proteoglycan link protein 3 (Hapln3) from Mus musculus (Mouse).